A 558-amino-acid chain; its full sequence is Glypican-1 (558 aa).

Residues 1 to 23 (MELRARGWWLLCAAAALVACARG) form the signal peptide. 7 disulfides stabilise this stretch: cysteine 32–cysteine 68, cysteine 62–cysteine 256, cysteine 69–cysteine 259, cysteine 191–cysteine 343, cysteine 246–cysteine 279, cysteine 268–cysteine 415, and cysteine 272–cysteine 401. Residues asparagine 79 and asparagine 116 are each glycosylated (N-linked (GlcNAc...) asparagine). A disordered region spans residues 341-374 (QGCGNPKVNPQGPGPEEKRRRGKLAPRERPPSGT). The span at 355–370 (PEEKRRRGKLAPRERP) shows a compositional bias: basic and acidic residues. Residues serine 486, serine 488, and serine 490 are each glycosylated (O-linked (Xyl...) (heparan sulfate) serine). Residues 505 to 534 (RKSSSSRTPLTHALPGLSEQEGQKTSAASC) are disordered. Serine 530 carries the GPI-anchor amidated serine lipid modification. The propeptide at 531 to 558 (AASCPQPPTFLLPLLLFLALTVARPRWR) is removed in mature form.

This sequence belongs to the glypican family. S-nitrosylated in a Cu(2+)-dependent manner. Nitric acid (NO) is released from the nitrosylated cysteines by ascorbate or by some other reducing agent, in a Cu(2+) or Zn(2+) dependent manner. This free nitric oxide is then capable of cleaving the heparan sulfate side chains. Post-translationally, N- and O-glycosylated. N-glycosylation is mainly of the complex type containing sialic acid. O-glycosylated with heparan sulfate. The heparan sulfate chains can be cleaved either by the action of heparanase or, degraded by a deaminative process that uses nitric oxide (NO) released from the S-nitrosylated cysteines. This process is triggered by ascorbate, or by some other reducing agent, in a Cu(2+)- or Zn(2+) dependent manner. Cu(2+) ions are provided by ceruloproteins such as APP, PRNP or CP which associate with GCP1 in intracellular compartments or lipid rafts. In terms of processing, this cell-associated glypican is further processed to give rise to a medium-released species.

It is found in the cell membrane. The protein localises to the endosome. The protein resides in the secreted. It localises to the extracellular space. Functionally, cell surface proteoglycan that bears heparan sulfate. Binds, via the heparan sulfate side chains, alpha-4 (V) collagen and participates in Schwann cell myelination. May act as a catalyst in increasing the rate of conversion of prion protein PRPN(C) to PRNP(Sc) via associating (via the heparan sulfate side chains) with both forms of PRPN, targeting them to lipid rafts and facilitating their interaction. Required for proper skeletal muscle differentiation by sequestering FGF2 in lipid rafts preventing its binding to receptors (FGFRs) and inhibiting the FGF-mediated signaling. This chain is Glypican-1 (GPC1), found in Homo sapiens (Human).